We begin with the raw amino-acid sequence, 512 residues long: Phospho-2-dehydro-3-deoxyheptonate aldolase 2, chloroplastic (512 aa).

A chloroplast-targeting transit peptide spans 1 to 57 (MALTATATTRGGSALPNSCLQTPKFQSLQKPTFISSFPTNKKTKPRTKHISAVQSPP). Residues 37–57 (FPTNKKTKPRTKHISAVQSPP) are disordered. C126 is a binding site for Mn(2+). Residues R165, 324–325 (ER), K347, and R378 contribute to the substrate site. The Mn(2+) site is built by H410, E452, and D482.

It belongs to the class-II DAHP synthase family. Homodimer. Requires Mn(2+) as cofactor. Mostly expressed in leaves and stems, and, to a lower extent, in roots, stigmas, anthers, petal tubes, petal limbs and sepals.

It is found in the plastid. It localises to the chloroplast. The enzyme catalyses D-erythrose 4-phosphate + phosphoenolpyruvate + H2O = 7-phospho-2-dehydro-3-deoxy-D-arabino-heptonate + phosphate. The protein operates within metabolic intermediate biosynthesis; chorismate biosynthesis; chorismate from D-erythrose 4-phosphate and phosphoenolpyruvate: step 1/7. Its function is as follows. Involved in the production of volatile organic compounds (VOCs). Catalyzes an aldol-like condensation reaction between phosphoenolpyruvate (PEP) and D-erythrose 4-phosphate (E4P) to generate 3-deoxy-D-arabino-heptulosonate 7-phosphate (DAH7P) and inorganic phosphate. The polypeptide is Phospho-2-dehydro-3-deoxyheptonate aldolase 2, chloroplastic (Petunia hybrida (Petunia)).